We begin with the raw amino-acid sequence, 411 residues long: Argininosuccinate synthase (411 aa).

Residues Ala13 to Ser21 and Ala40 contribute to the ATP site. The L-citrulline site is built by Tyr91 and Ser96. Gly121 is an ATP binding site. Residues Thr123, Asn127, and Asp128 each contribute to the L-aspartate site. L-citrulline is bound at residue Asn127. L-citrulline contacts are provided by Arg131, Ser182, Ser191, Glu267, and Tyr279.

The protein belongs to the argininosuccinate synthase family. Type 1 subfamily. As to quaternary structure, homotetramer.

The protein resides in the cytoplasm. The enzyme catalyses L-citrulline + L-aspartate + ATP = 2-(N(omega)-L-arginino)succinate + AMP + diphosphate + H(+). The protein operates within amino-acid biosynthesis; L-arginine biosynthesis; L-arginine from L-ornithine and carbamoyl phosphate: step 2/3. This chain is Argininosuccinate synthase, found in Bartonella tribocorum (strain CIP 105476 / IBS 506).